The chain runs to 461 residues: Cyclin-A2-4 (461 aa).

It belongs to the cyclin family. Cyclin AB subfamily.

The protein is Cyclin-A2-4 (CYCA2-4) of Arabidopsis thaliana (Mouse-ear cress).